A 109-amino-acid polypeptide reads, in one-letter code: A-type ATP synthase subunit F (109 aa).

It belongs to the V-ATPase F subunit family. In terms of assembly, has multiple subunits with at least A(3), B(3), C, D, E, F, H, I and proteolipid K(x).

The protein resides in the cell membrane. Functionally, component of the A-type ATP synthase that produces ATP from ADP in the presence of a proton gradient across the membrane. In Haloquadratum walsbyi (strain DSM 16790 / HBSQ001), this protein is A-type ATP synthase subunit F.